We begin with the raw amino-acid sequence, 381 residues long: Neuropeptide Y receptor type 2 (381 aa).

The tract at residues 1–35 (MGPIGTEADENQTVEEMKVEQYGPQTTPRGELVPD) is disordered. Over 1–51 (MGPIGTEADENQTVEEMKVEQYGPQTTPRGELVPDPEPELIDSTKLIEVQV) the chain is Extracellular. A glycan (N-linked (GlcNAc...) asparagine) is linked at N11. Residues 52-72 (VLILAYCSIILLGVIGNSLVI) traverse the membrane as a helical segment. The Cytoplasmic segment spans residues 73–86 (HVVIKFKSMRTVTN). The chain crosses the membrane as a helical span at residues 87-107 (FFIANLAVADLVVNTLCLPFT). The Extracellular segment spans residues 108–124 (LTYTLMGEWKMGPVLCH). A disulfide bond links C123 and C203. Residues 125-145 (LVPYAQGLAVQVSTITLTVIA) form a helical membrane-spanning segment. The Cytoplasmic segment spans residues 146–165 (LDRHRCIVYHLESKISKRIS). Residues 166 to 186 (FLIIGLAWGISALLASPLAIF) form a helical membrane-spanning segment. Residues 187–216 (REYSLIEIIPDFEIVACTEKWPGEEKSIYG) lie on the Extracellular side of the membrane. The helical transmembrane segment at 217–237 (TVYSLSSLLILYVLPLGIISF) threads the bilayer. Topologically, residues 238–268 (SYTRIWSKLKSHVSPGAANDHYHQRRQKTTK) are cytoplasmic. The helical transmembrane segment at 269–289 (MLVCVVVVFAVSWLPLHAFQL) threads the bilayer. Residues 290–304 (AVDIDSHVLDLKEYK) are Extracellular-facing. Residues 305–325 (LIFTVFHIIAMCSTFANPLLY) traverse the membrane as a helical segment. Residues 326–381 (GWMNSNYRKAFLSAFRCEQRLDAIHSEVSVTFKAKKNLEVRKNSGPNDSFTEATNV) are Cytoplasmic-facing. A lipid anchor (S-palmitoyl cysteine) is attached at C342.

Belongs to the G-protein coupled receptor 1 family.

Its subcellular location is the cell membrane. Its function is as follows. Receptor for neuropeptide Y and peptide YY. The sequence is that of Neuropeptide Y receptor type 2 (NPY2R) from Macaca mulatta (Rhesus macaque).